The following is a 295-amino-acid chain: Pyridoxal 5'-phosphate synthase subunit PdxS (295 aa).

Asp-25 is a binding site for D-ribose 5-phosphate. Residue Lys-82 is the Schiff-base intermediate with D-ribose 5-phosphate of the active site. Residue Gly-154 participates in D-ribose 5-phosphate binding. Arg-166 provides a ligand contact to D-glyceraldehyde 3-phosphate. Residues Gly-215 and 236 to 237 (GS) contribute to the D-ribose 5-phosphate site.

The protein belongs to the PdxS/SNZ family. In the presence of PdxT, forms a dodecamer of heterodimers.

The catalysed reaction is aldehydo-D-ribose 5-phosphate + D-glyceraldehyde 3-phosphate + L-glutamine = pyridoxal 5'-phosphate + L-glutamate + phosphate + 3 H2O + H(+). The protein operates within cofactor biosynthesis; pyridoxal 5'-phosphate biosynthesis. Functionally, catalyzes the formation of pyridoxal 5'-phosphate from ribose 5-phosphate (RBP), glyceraldehyde 3-phosphate (G3P) and ammonia. The ammonia is provided by the PdxT subunit. Can also use ribulose 5-phosphate and dihydroxyacetone phosphate as substrates, resulting from enzyme-catalyzed isomerization of RBP and G3P, respectively. The polypeptide is Pyridoxal 5'-phosphate synthase subunit PdxS (Staphylococcus epidermidis (strain ATCC 35984 / DSM 28319 / BCRC 17069 / CCUG 31568 / BM 3577 / RP62A)).